We begin with the raw amino-acid sequence, 60 residues long: Cytotoxin 2 (60 aa).

Cystine bridges form between C3–C21, C14–C38, C42–C53, and C54–C59.

It belongs to the three-finger toxin family. Short-chain subfamily. Type IA cytotoxin sub-subfamily. As to quaternary structure, monomer in solution; Homodimer and oligomer in the presence of negatively charged lipids forming a pore with a size ranging between 20 and 30 Angstroms. Expressed by the venom gland.

Its subcellular location is the secreted. It is found in the target cell membrane. Functionally, shows cytolytic activity on many different cells by forming pore in lipid membranes. In vivo, increases heart rate or kills the animal by cardiac arrest. In addition, it binds to heparin with high affinity, interacts with Kv channel-interacting protein 1 (KCNIP1) in a calcium-independent manner, and binds to integrin alpha-V/beta-3 (ITGAV/ITGB3) with moderate affinity. The chain is Cytotoxin 2 from Naja annulifera (Banded Egyptian cobra).